Consider the following 76-residue polypeptide: Conotoxin Gla(1)-TxVI (76 aa).

Residues 1 to 19 form the signal peptide; it reads MEKLTILLLVAAVLMSTQA. Residues 20-45 constitute a propeptide that is removed on maturation; the sequence is LVERAGENHSKENINFLLKRKRAADR. Tryptophan 48 is subject to 6'-bromotryptophan. 4-carboxyglutamate is present on glutamate 50. Cystine bridges form between cysteine 51/cysteine 65, cysteine 58/cysteine 69, and cysteine 64/cysteine 73. Residue proline 61 is modified to 4-hydroxyproline. 4-carboxyglutamate is present on residues glutamate 63, glutamate 67, and glutamate 70. Tryptophan 76 carries the 6'-bromotryptophan modification.

As to expression, expressed by the venom duct.

Its subcellular location is the secreted. The sequence is that of Conotoxin Gla(1)-TxVI from Conus textile (Cloth-of-gold cone).